The following is a 179-amino-acid chain: Large ribosomal subunit protein uL5 (179 aa).

This sequence belongs to the universal ribosomal protein uL5 family. As to quaternary structure, part of the 50S ribosomal subunit; part of the 5S rRNA/L5/L18/L25 subcomplex. Contacts the 5S rRNA and the P site tRNA. Forms a bridge to the 30S subunit in the 70S ribosome.

Its function is as follows. This is one of the proteins that bind and probably mediate the attachment of the 5S RNA into the large ribosomal subunit, where it forms part of the central protuberance. In the 70S ribosome it contacts protein S13 of the 30S subunit (bridge B1b), connecting the 2 subunits; this bridge is implicated in subunit movement. Contacts the P site tRNA; the 5S rRNA and some of its associated proteins might help stabilize positioning of ribosome-bound tRNAs. The sequence is that of Large ribosomal subunit protein uL5 from Prochlorococcus marinus (strain MIT 9211).